Consider the following 765-residue polypeptide: Protein transport protein Sec23A (765 aa).

Thr-2 bears the N-acetylthreonine mark. Positions 61, 66, 85, and 88 each coordinate Zn(2+). Thr-308 bears the Phosphothreonine mark. One copy of the Gelsolin-like repeat lies at 632 to 718; the sequence is PEPVLLDSSS…EHGGSQARFL (87 aa).

Belongs to the SEC23/SEC24 family. SEC23 subfamily. COPII is composed of at least five proteins: the Sec23/24 complex, the Sec13/31 complex and Sar1. Interacts with SEC23IP. Interacts with HTR4. Interacts with SEC16A. Interacts with SLC6A4. Interacts (as part of the Sec23/24 complex) with SEC22B; recruits SEC22B into COPII-coated vesicles and allows the transport of this cargo from the endoplasmic reticulum to the Golgi. Interacts (via Gelsolin-like repeat) with MIA2 and MIA3; specifically involved in the transport of large cargos like the collagen COL7A1. Interacts with DDHD1. Interacts with TMEM39A. Interacts with SACM1L; this interaction is reduced in the absence of TMEM39A. Interacts with kinase FAM20C; transport of FAM20C from the endoplasmic reticulum to the Golgi is likely to be mediated by COPII vesicles.

It localises to the cytoplasmic vesicle. The protein resides in the COPII-coated vesicle membrane. The protein localises to the endoplasmic reticulum membrane. It is found in the cytoplasm. Its subcellular location is the cytosol. In terms of biological role, component of the coat protein complex II (COPII) which promotes the formation of transport vesicles from the endoplasmic reticulum (ER). The coat has two main functions, the physical deformation of the endoplasmic reticulum membrane into vesicles and the selection of cargo molecules for their transport to the Golgi complex. Required for the translocation of insulin-induced glucose transporter SLC2A4/GLUT4 to the cell membrane. The polypeptide is Protein transport protein Sec23A (Pongo abelii (Sumatran orangutan)).